The primary structure comprises 404 residues: Dual-specificity RNA methyltransferase RlmN (404 aa).

The active-site Proton acceptor is Glu118. The 233-residue stretch at 125 to 357 folds into the Radical SAM core domain; sequence VGRAGALCVS…NKAGYSSPIR (233 aa). A disulfide bond links Cys132 and Cys368. Residues Cys139, Cys143, and Cys146 each coordinate [4Fe-4S] cluster. Residues 194–195, Ser226, 248–250, and Asn325 contribute to the S-adenosyl-L-methionine site; these read GE and SLH. Cys368 serves as the catalytic S-methylcysteine intermediate.

This sequence belongs to the radical SAM superfamily. RlmN family. [4Fe-4S] cluster serves as cofactor.

The protein localises to the cytoplasm. The enzyme catalyses adenosine(2503) in 23S rRNA + 2 reduced [2Fe-2S]-[ferredoxin] + 2 S-adenosyl-L-methionine = 2-methyladenosine(2503) in 23S rRNA + 5'-deoxyadenosine + L-methionine + 2 oxidized [2Fe-2S]-[ferredoxin] + S-adenosyl-L-homocysteine. It carries out the reaction adenosine(37) in tRNA + 2 reduced [2Fe-2S]-[ferredoxin] + 2 S-adenosyl-L-methionine = 2-methyladenosine(37) in tRNA + 5'-deoxyadenosine + L-methionine + 2 oxidized [2Fe-2S]-[ferredoxin] + S-adenosyl-L-homocysteine. In terms of biological role, specifically methylates position 2 of adenine 2503 in 23S rRNA and position 2 of adenine 37 in tRNAs. m2A2503 modification seems to play a crucial role in the proofreading step occurring at the peptidyl transferase center and thus would serve to optimize ribosomal fidelity. In Caulobacter vibrioides (strain ATCC 19089 / CIP 103742 / CB 15) (Caulobacter crescentus), this protein is Dual-specificity RNA methyltransferase RlmN.